The chain runs to 312 residues: Olfactory receptor 867 (312 aa).

The Extracellular portion of the chain corresponds to Met-1–Asn-6. A helical membrane pass occupies residues Pro-7–Val-30. The Cytoplasmic segment spans residues Ser-31–Asn-38. Residues Leu-39–Pro-60 form a helical membrane-spanning segment. Over Lys-61–Gln-81 the chain is Extracellular. Cys-78 and Cys-160 are joined by a disulfide. Residues Val-82 to Cys-101 form a helical membrane-spanning segment. At Asp-102 to Gln-120 the chain is on the cytoplasmic side. Residues Leu-121–Ile-139 form a helical membrane-spanning segment. The Extracellular portion of the chain corresponds to His-140 to Asn-177. Asn-148 carries an N-linked (GlcNAc...) asparagine glycan. The chain crosses the membrane as a helical span at residues Val-178–Ser-200. Over Gln-201–Lys-217 the chain is Cytoplasmic. A helical membrane pass occupies residues Ala-218–Phe-241. The Extracellular segment spans residues Cys-242–Met-253. The helical transmembrane segment at Ile-254–Leu-273 threads the bilayer. Residues Arg-274–Leu-312 lie on the Cytoplasmic side of the membrane.

It belongs to the G-protein coupled receptor 1 family. In terms of tissue distribution, epithelium of the tongue; including the taste buds.

Its subcellular location is the cell membrane. In terms of biological role, possible olfactory or taste receptor. This chain is Olfactory receptor 867 (Olr867), found in Rattus norvegicus (Rat).